A 264-amino-acid chain; its full sequence is Versicolorin reductase stcU (264 aa).

NADP(+)-binding residues include Ile23, Asp69, Asn96, and Arg129. Active-site proton donor residues include Ser145 and Ser146. NADP(+) is bound by residues Tyr160, Lys164, Ile193, and Thr195. Catalysis depends on Tyr160, which acts as the Proton acceptor. Lys164 functions as the Lowers pKa of active site Tyr in the catalytic mechanism.

The protein belongs to the short-chain dehydrogenases/reductases (SDR) family.

It catalyses the reaction (4S,8R)-2,13,16,20-tetrahydroxy-7,9-dioxapentacyclo[10.8.0.0(3,10).0(4,8).0(14,19)]icosa-1(12),2,5,10,13,16,19-heptaen-18-one + NADPH + H(+) = (4S,8R,16R)-2,13,16,20-tetrahydroxy-7,9-dioxapentacyclo[10.8.0.0(3,10).0(4,8).0(14,19)]icosa-1(12),2,5,10,13,19-hexaen-18-one + NADP(+). The protein operates within mycotoxin biosynthesis; sterigmatocystin biosynthesis. Functionally, versicolorin reductase; part of the gene cluster that mediates the biosynthesis of sterigmatocystin (ST), a polyketide-derived furanocoumarin which is part of the most toxic and carcinogenic compounds among the known mycotoxins. The first step in the biosynthesis of sterigmatocystin is the production of hexanoate by the fatty acid synthase (FAS) units stcJ and stcK. The polyketide backbone is assembled by the non-reducing polyketide synthase stcA by condensation of the starter hexanoyl-CoA and 7 malonyl-CoA extender units followed by cyclization and release of norsolorinic acid. Norsolorinic acid is the first stable intermediate in the biosynthesis of sterigmatocystin and is converted into averantin (AVN) by the ketoreductase stcE which reduces the hexanoate ketone to an alcohol. Averantin is then oxidized into 5'-hydroxyaverantin (HAVN) by the cytochrome P450 monooxygenase stcF. 5'-hydroxyaverantin is further converted to 5'-oxyaverantin (OAVN) by the 5'-hydroxyaverantin dehydrogenase stcG. The next step is the conversion of OAVN into averufin (AVF) which is catalyzed by a yet to be identified enzyme. The cytochrome P450 monooxygenase stcB and the flavin-binding monooxygenase stcW are both required for the conversion of averufin to 1-hydroxyversicolorone. The esterase stcI probably catalyzes the formation of versiconal hemiacetal acetate from 1-hydroxyversicolorone. The oxydoreductase stcN then probably catalyzes the biosynthetic step from versiconal to versicolorin B (VERB). The next step is performed by the versicolorin B desaturase stcL to produce versicolorin A (VERA). The ketoreductase stcU and the cytochrome P450 monooxygenase stcS are involved in the conversion of versicolorin A to demethylsterigmatocystin. The Baeyer-Villiger oxidas stcQ and the reductase stcR might be involved in the biosynthetic step from versicolorin A to demethylsterigmatocystin. The final step in the biosynthesis of sterigmatocystin is the methylation of demethylsterigmatocystin catalyzed by the methyltransferase stcP. In Emericella nidulans (strain FGSC A4 / ATCC 38163 / CBS 112.46 / NRRL 194 / M139) (Aspergillus nidulans), this protein is Versicolorin reductase stcU.